A 297-amino-acid chain; its full sequence is HTH-type transcriptional regulator ArgP (297 aa).

The region spanning 4–60 is the HTH lysR-type domain; the sequence is PDYRTLQALDAVIRERGFERAAQKLCITQSAVSQRIKQLENLFGQPLLVRTIPPRPT. A DNA-binding region (H-T-H motif) is located at residues 21 to 40; that stretch reads FERAAQKLCITQSAVSQRIK.

Belongs to the LysR transcriptional regulatory family. Homodimer.

Functionally, controls the transcription of genes involved in arginine and lysine metabolism. The polypeptide is HTH-type transcriptional regulator ArgP (Pectobacterium atrosepticum (strain SCRI 1043 / ATCC BAA-672) (Erwinia carotovora subsp. atroseptica)).